The following is a 484-amino-acid chain: MADKIERHTFKVFNQDFSVDKRFQLIKEIGHGAYGIVCSARFAEAAEDTTVAIKKVTNVFSKTLLCKRSLRELKLLRHFRGHKNITCLYDMDIVFYPDGSINGLYLYEELMECDMHQIIKSGQPLTDAHYQSFTYQILCGLKYIHSADVLHRDLKPGNLLVNADCQLKICDFGLARGYSENPVENSQFLTEYVATRWYRAPEIMLSYQGYTKAIDVWSAGCILAEFLGGKPIFKGKDYVNQLNQILQVLGTPPDETLRRIGSKNVQDYIHQLGFIPKVPFVNLYPNANSQALDLLEQMLAFDPQKRITVDEALEHPYLSIWHDPADEPVCSEKFEFSFESVNDMEDLKQMVIQEVQDFRLFVRQPLLEEQRQLQLQQQQQQQQQQQQQQQQPSDVDNGNAAASEENYPKQMATSNSVAPQQESFGIHSQNLPRHDADFPPRPQESMMEMRPATGNTADIPPQNDNGTLLDLEKELEFGLDRKYF.

The 296-residue stretch at 23–318 folds into the Protein kinase domain; it reads FQLIKEIGHG…VDEALEHPYL (296 aa). ATP is bound by residues 29–37 and K54; that span reads IGHGAYGIV. The Proton acceptor role is filled by D153. T190 is modified (phosphothreonine). Residues 190–192 carry the TXY motif; it reads TEY. Phosphotyrosine is present on Y192. The span at 383–392 shows a compositional bias: low complexity; it reads QQQQQQQQQP. 2 disordered regions span residues 383–403 and 426–464; these read QQQQ…AAAS and IHSQ…PQND.

It belongs to the protein kinase superfamily. CMGC Ser/Thr protein kinase family. MAP kinase subfamily. In terms of assembly, interacts with RLM1. Requires Mg(2+) as cofactor. In terms of processing, dually phosphorylated on Thr-190 and Tyr-192, which activates the enzyme.

It catalyses the reaction L-seryl-[protein] + ATP = O-phospho-L-seryl-[protein] + ADP + H(+). The enzyme catalyses L-threonyl-[protein] + ATP = O-phospho-L-threonyl-[protein] + ADP + H(+). Activated by tyrosine and threonine phosphorylation by MKK1 and MKK2. Its function is as follows. Serine/threonine protein kinase involved in a signal transduction pathway that plays a role in yeast cell morphogenesis and cell growth. This pathway seems to start by SMP3; then involve the kinase PKC1 that may act the BCK1 kinase that then phosphorylates MKK1 and MKK2 which themselves phosphorylate the SLT2/MPK1 kinase which itself then phosphorylates and activates the transcription factor RLM1. Directly phosphorylates BCY1 upon TOR complex 1 (TORC1) inhibition. The sequence is that of Mitogen-activated protein kinase SLT2/MPK1 (SLT2) from Saccharomyces cerevisiae (strain ATCC 204508 / S288c) (Baker's yeast).